The following is a 231-amino-acid chain: Small ribosomal subunit protein uS3 (231 aa).

The KH type-2 domain occupies 39–107; that stretch reads IRKYIVENLP…DVKLNIVEIR (69 aa).

Belongs to the universal ribosomal protein uS3 family. Part of the 30S ribosomal subunit. Forms a tight complex with proteins S10 and S14.

Binds the lower part of the 30S subunit head. Binds mRNA in the 70S ribosome, positioning it for translation. This chain is Small ribosomal subunit protein uS3, found in Novosphingobium aromaticivorans (strain ATCC 700278 / DSM 12444 / CCUG 56034 / CIP 105152 / NBRC 16084 / F199).